The sequence spans 693 residues: MNNLDSSLQAHNKLEKEATNLALLKDRVDKYHDLSTQMSSILTIFEKRLGNLEQTILPVYQETEQLQKRQQNLEATLNCLESVLSHYDVSQEVCQLIHQGPVEGNISVFLDALAKLRDANDYFRHNNSQSVELENVTSLFNTGCEGLSQHYSMLLKKHSAPLKPVELLDLIYIEDDSSDEYTSFRQLSQTTREELYTISHWLEQNLREYTNIYATERGEVVLRSLQLLKDHQKSNSWGHEALRPRHSGRQTEPKKTTSARLQQIFEKKANKLYLRATQTIEQSTGFSIKKASSHSDHLTSEDLMDGDQELDKYLVMLLGLQRLLNWERAIMIDIIPQSKHNEVFATLAYNAIDLVVKDAEAITQRILRCISRKEWTSALGIFSALKRVILLQPDIDRTYDPAQREQLKKVLKKLQHTGAKALEHFLDVVKGESSTNIVGQSNVPKDATVHELTSNTIWFIEHLYDHFDVIGSILAQDVLYSTQLDTILMKKALPVEERNKALLAIYIKKALAELNLSIMNKCEQYNDQATKHLFRLNNIHYILKSLQRSNLIDLVTLAEPECEHSYMEMIRELKASYQKTWSKMLVGIYSLDELPKPVAGKVKDKDRSVLKERFSNFNKDFEEACKIQRGISIPDVILREGIKRDNVEHILPIYNRFYEIYSGVHFSKNPDKYVKYRQHEINAMLSKLFDDSA.

S236 carries the post-translational modification Phosphoserine. The interval 236–259 is disordered; the sequence is SWGHEALRPRHSGRQTEPKKTTSA.

This sequence belongs to the EXO70 family. In terms of assembly, the exocyst complex is composed of Sec3/Exoc1, Sec5/Exoc2, Sec6/Exoc3, Sec8/Exoc4, Sec10/Exoc5, Sec15/Exoc6, Exo70/Exoc7 and Exo84/Exoc8.

In terms of biological role, required for exocytosis. Thought to function in intracellular vesicle targeting and docking before SNARE complex formation. The protein is Exocyst complex component 7 of Drosophila melanogaster (Fruit fly).